We begin with the raw amino-acid sequence, 648 residues long: MATAVEPEDQDLWEEEGILMVKLEDDFTCRPESVLQRDDPVLETSHQNFRRFRYQEAASPREALIRLRELCHQWLRPERRTKEQILELLVLEQFLTVLPGELQSWVRGQRPESGEEAVTLVEGLQKQPRRPRRWVTVHVHGQEVLSEETVHLGVEPESPNELQDPVQSSTPEQSPEETTQSPDLGAPAEQRPHQEEELQTLQESEVPVPEDPDLPAERSSGDSEMVALLTALSQGLVTFKDVAVCFSQDQWSDLDPTQKEFYGEYVLEEDCGIVVSLSFPIPRPDEISQVREEEPWVPDIQEPQETQEPEILSFTYTGDRSKDEEECLEQEDLSLEDIHRPVLGEPEIHQTPDWEIVFEDNPGRLNERRFGTNISQVNSFVNLRETTPVHPLLGRHHDCSVCGKSFTCNSHLVRHLRTHTGEKPYKCMECGKSYTRSSHLARHQKVHKMNAPYKYPLNRKNLEETSPVTQAERTPSVEKPYRCDDCGKHFRWTSDLVRHQRTHTGEKPFFCTICGKSFSQKSVLTTHQRIHLGGKPYLCGECGEDFSEHRRYLAHRKTHAAEELYLCSECGRCFTHSAAFAKHLRGHASVRPCRCNECGKSFSRRDHLVRHQRTHTGEKPFTCPTCGKSFSRGYHLIRHQRTHSEKTS.

A Glycyl lysine isopeptide (Lys-Gly) (interchain with G-Cter in SUMO2) cross-link involves residue Lys-22. The SCAN box domain occupies 46–127 (HQNFRRFRYQ…VTLVEGLQKQ (82 aa)). The segment at 146–221 (SEETVHLGVE…PDLPAERSSG (76 aa)) is disordered. Positions 165–182 (PVQSSTPEQSPEETTQSP) are enriched in polar residues. The KRAB domain occupies 237-308 (VTFKDVAVCF…DIQEPQETQE (72 aa)). 2 consecutive C2H2-type zinc fingers follow at residues 397–419 (HDCS…LRTH) and 425–447 (YKCM…QKVH). Glycyl lysine isopeptide (Lys-Gly) (interchain with G-Cter in SUMO2) cross-links involve residues Lys-454 and Lys-460. Ser-466 bears the Phosphoserine mark. The C2H2-type 3 zinc-finger motif lies at 481–503 (YRCDDCGKHFRWTSDLVRHQRTH). Glycyl lysine isopeptide (Lys-Gly) (interchain with G-Cter in SUMO2) cross-links involve residues Lys-507 and Lys-521. C2H2-type zinc fingers lie at residues 509 to 531 (FFCT…QRIH), 537 to 559 (YLCG…RKTH), 565 to 587 (YLCS…LRGH), 593 to 615 (CRCN…QRTH), and 621 to 643 (FTCP…QRTH).

Interacts with SDP1. In terms of tissue distribution, highly expressed in testis. Also expressed in breast carcinoma cell lines.

Its subcellular location is the nucleus. In terms of biological role, transcriptional repressor that binds to elements found predominantly in genes that participate in lipid metabolism. Among its targets are structural components of lipoprotein particles (apolipoproteins AIV, CIII, and E), enzymes involved in lipid processing (lipoprotein lipase, lecithin cholesteryl ester transferase), transporters involved in lipid homeostasis (ABCA1, ABCG1), and several genes involved in processes related to energy metabolism and vascular disease. This Homo sapiens (Human) protein is Zinc finger protein 202 (ZNF202).